Here is a 156-residue protein sequence, read N- to C-terminus: 6,7-dimethyl-8-ribityllumazine synthase (156 aa).

5-amino-6-(D-ribitylamino)uracil-binding positions include Phe-22, 57-59 (AYE), and 81-83 (SVI). 86-87 (GT) is a (2S)-2-hydroxy-3-oxobutyl phosphate binding site. The active-site Proton donor is the His-89. Residue Phe-114 participates in 5-amino-6-(D-ribitylamino)uracil binding. (2S)-2-hydroxy-3-oxobutyl phosphate is bound at residue Arg-128.

The protein belongs to the DMRL synthase family. In terms of assembly, forms an icosahedral capsid composed of 60 subunits, arranged as a dodecamer of pentamers.

It carries out the reaction (2S)-2-hydroxy-3-oxobutyl phosphate + 5-amino-6-(D-ribitylamino)uracil = 6,7-dimethyl-8-(1-D-ribityl)lumazine + phosphate + 2 H2O + H(+). It participates in cofactor biosynthesis; riboflavin biosynthesis; riboflavin from 2-hydroxy-3-oxobutyl phosphate and 5-amino-6-(D-ribitylamino)uracil: step 1/2. Functionally, catalyzes the formation of 6,7-dimethyl-8-ribityllumazine by condensation of 5-amino-6-(D-ribitylamino)uracil with 3,4-dihydroxy-2-butanone 4-phosphate. This is the penultimate step in the biosynthesis of riboflavin. This is 6,7-dimethyl-8-ribityllumazine synthase from Photobacterium leiognathi.